A 113-amino-acid chain; its full sequence is Hydrogenase maturation factor HybF (113 aa).

H2 and E3 together coordinate Ni(2+). Residues C73, C76, C89, and C92 each contribute to the Zn(2+) site.

This sequence belongs to the HypA/HybF family. HybF subfamily.

In terms of biological role, involved in the maturation of [NiFe] hydrogenases. Required for nickel insertion into the metal center of the hydrogenase. The polypeptide is Hydrogenase maturation factor HybF (Proteus vulgaris).